We begin with the raw amino-acid sequence, 671 residues long: MSQIPSPNDPASTGAAPSSAAVPAGPSATPAPSPTAGFSLPGHRPPPSGKALAALAVGALGVVYGDIGTSPLYSLKECFGGPHGVRPTDANVLGVLSLVFWAMTFVVTFKYMSFVMRADNRGEGGILALMALVGKTETTRLGRRMLLMLGLFGAALLYGDGIITPAISVLGAVEGVAVAAPAMERAVVPATVVILVFLFLFQKQGTAKVGAVFGPVMLVWFATIAVLGVRGILHDPTILRALLPTHGLSFFARNGWHGFLVLGGVVLVITGGEALYADMGHFGKRPIRVAWLGLAMPALLLNYLGQGALLLHDPGAARNPFYLLAPEWALYPTIAIATAAAIVASQALISGAYSLTQQAIQLGYSPRVTIRHTSQREIGQIYLPEVNWMLGTACLALVLGFQTSSRLASAYGIAVTGTMIVTTLLFHRVMRDRWGWARWKAWPLTVLFLTVDAAFFLANVVKFRDGGWFPIAAAALVFTLMSTWKRGRDALALMLKDAGLPLDLFMADVARRKVQRVAGTAVFMTSNPGGVPPVLLHHLKHNKVLHERVVLVSILAHEIPFVNEPERVNARELGSGFFQVIAHYGFMETPDVPALLDSLPRRELAGPRLTIVPMETTYFLGRETLLANGPSTIPTWRKRLFIVMARNAQTASAFFGLPPNRVVEMGAQIQL.

The tract at residues 1 to 43 is disordered; that stretch reads MSQIPSPNDPASTGAAPSSAAVPAGPSATPAPSPTAGFSLPGH. Residues 10 to 37 show a composition bias toward low complexity; the sequence is PASTGAAPSSAAVPAGPSATPAPSPTAG. Helical transmembrane passes span 52–72, 92–112, 147–167, 181–201, 209–229, 255–275, 291–311, 323–343, 381–401, 407–427, 441–461, and 465–485; these read LAALAVGALGVVYGDIGTSPL, VLGVLSLVFWAMTFVVTFKYM, LMLGLFGAALLYGDGIITPAI, PAMERAVVPATVVILVFLFLF, VGAVFGPVMLVWFATIAVLGV, GWHGFLVLGGVVLVITGGEAL, WLGLAMPALLLNYLGQGALLL, LLAPEWALYPTIAIATAAAIV, IYLPEVNWMLGTACLALVLGF, LASAYGIAVTGTMIVTTLLFH, AWPLTVLFLTVDAAFFLANVV, and DGGWFPIAAAALVFTLMSTWK.

The protein belongs to the HAK/KUP transporter (TC 2.A.72) family.

The protein localises to the cell inner membrane. The catalysed reaction is K(+)(in) + H(+)(in) = K(+)(out) + H(+)(out). Transport of potassium into the cell. Likely operates as a K(+):H(+) symporter. In Anaeromyxobacter dehalogenans (strain 2CP-1 / ATCC BAA-258), this protein is Probable potassium transport system protein Kup.